We begin with the raw amino-acid sequence, 382 residues long: UDP-4-amino-4-deoxy-L-arabinose--oxoglutarate aminotransferase (382 aa).

Lysine 182 is modified (N6-(pyridoxal phosphate)lysine).

The protein belongs to the DegT/DnrJ/EryC1 family. ArnB subfamily. As to quaternary structure, homodimer. Requires pyridoxal 5'-phosphate as cofactor.

The enzyme catalyses UDP-4-amino-4-deoxy-beta-L-arabinose + 2-oxoglutarate = UDP-beta-L-threo-pentopyranos-4-ulose + L-glutamate. The protein operates within nucleotide-sugar biosynthesis; UDP-4-deoxy-4-formamido-beta-L-arabinose biosynthesis; UDP-4-deoxy-4-formamido-beta-L-arabinose from UDP-alpha-D-glucuronate: step 2/3. It functions in the pathway bacterial outer membrane biogenesis; lipopolysaccharide biosynthesis. In terms of biological role, catalyzes the conversion of UDP-4-keto-arabinose (UDP-Ara4O) to UDP-4-amino-4-deoxy-L-arabinose (UDP-L-Ara4N). The modified arabinose is attached to lipid A and is required for resistance to polymyxin and cationic antimicrobial peptides. The protein is UDP-4-amino-4-deoxy-L-arabinose--oxoglutarate aminotransferase of Yersinia enterocolitica serotype O:8 / biotype 1B (strain NCTC 13174 / 8081).